The chain runs to 625 residues: Arginine--tRNA ligase (625 aa).

The 'HIGH' region motif lies at 128 to 138 (VNPTKPLHMGH).

This sequence belongs to the class-I aminoacyl-tRNA synthetase family.

It localises to the cytoplasm. The enzyme catalyses tRNA(Arg) + L-arginine + ATP = L-arginyl-tRNA(Arg) + AMP + diphosphate. The sequence is that of Arginine--tRNA ligase (argS) from Pyrococcus abyssi (strain GE5 / Orsay).